A 237-amino-acid polypeptide reads, in one-letter code: Small ribosomal subunit protein uS3 (237 aa).

The KH type-2 domain occupies 17-86 (VERHLGHELK…SPQIEVQQVD (70 aa)).

Belongs to the universal ribosomal protein uS3 family. As to quaternary structure, part of the 30S ribosomal subunit.

Its function is as follows. Binds the lower part of the 30S subunit head. This chain is Small ribosomal subunit protein uS3, found in Methanospirillum hungatei JF-1 (strain ATCC 27890 / DSM 864 / NBRC 100397 / JF-1).